The chain runs to 290 residues: Taxis protein CheF1 (290 aa).

Interacts with chemotaxis (Che) proteins as well as flagella accessory (Fla) proteins.

Functionally, involved in taxis signal transduction. Essential for the ability to control the direction of flagellar rotation. May have a role between CheY and the flagellum. The sequence is that of Taxis protein CheF1 (cheF1) from Halobacterium salinarum (strain ATCC 29341 / DSM 671 / R1).